Consider the following 227-residue polypeptide: Cytochrome c oxidase subunit 2 (227 aa).

The Mitochondrial intermembrane portion of the chain corresponds to 1-14; that stretch reads MAYPFQLGLQDATS. The chain crosses the membrane as a helical span at residues 15 to 45; the sequence is PIMEELMNFHDHTLMIVFLISSLVLYIISLM. Topologically, residues 46-59 are mitochondrial matrix; that stretch reads LTTKLTHTSTMDAQ. A helical transmembrane segment spans residues 60-87; the sequence is EVETIWTILPAAILILIALPSLRILYMM. Topologically, residues 88 to 227 are mitochondrial intermembrane; it reads DEINNPVLTV…YFENWSASMI (140 aa). Cu cation is bound by residues His161, Cys196, Glu198, Cys200, His204, and Met207. Glu198 is a binding site for Mg(2+).

This sequence belongs to the cytochrome c oxidase subunit 2 family. In terms of assembly, component of the cytochrome c oxidase (complex IV, CIV), a multisubunit enzyme composed of 14 subunits. The complex is composed of a catalytic core of 3 subunits MT-CO1, MT-CO2 and MT-CO3, encoded in the mitochondrial DNA, and 11 supernumerary subunits COX4I, COX5A, COX5B, COX6A, COX6B, COX6C, COX7A, COX7B, COX7C, COX8 and NDUFA4, which are encoded in the nuclear genome. The complex exists as a monomer or a dimer and forms supercomplexes (SCs) in the inner mitochondrial membrane with NADH-ubiquinone oxidoreductase (complex I, CI) and ubiquinol-cytochrome c oxidoreductase (cytochrome b-c1 complex, complex III, CIII), resulting in different assemblies (supercomplex SCI(1)III(2)IV(1) and megacomplex MCI(2)III(2)IV(2)). Found in a complex with TMEM177, COA6, COX18, COX20, SCO1 and SCO2. Interacts with TMEM177 in a COX20-dependent manner. Interacts with COX20. Interacts with COX16. The cofactor is Cu cation.

The protein localises to the mitochondrion inner membrane. It carries out the reaction 4 Fe(II)-[cytochrome c] + O2 + 8 H(+)(in) = 4 Fe(III)-[cytochrome c] + 2 H2O + 4 H(+)(out). Functionally, component of the cytochrome c oxidase, the last enzyme in the mitochondrial electron transport chain which drives oxidative phosphorylation. The respiratory chain contains 3 multisubunit complexes succinate dehydrogenase (complex II, CII), ubiquinol-cytochrome c oxidoreductase (cytochrome b-c1 complex, complex III, CIII) and cytochrome c oxidase (complex IV, CIV), that cooperate to transfer electrons derived from NADH and succinate to molecular oxygen, creating an electrochemical gradient over the inner membrane that drives transmembrane transport and the ATP synthase. Cytochrome c oxidase is the component of the respiratory chain that catalyzes the reduction of oxygen to water. Electrons originating from reduced cytochrome c in the intermembrane space (IMS) are transferred via the dinuclear copper A center (CU(A)) of subunit 2 and heme A of subunit 1 to the active site in subunit 1, a binuclear center (BNC) formed by heme A3 and copper B (CU(B)). The BNC reduces molecular oxygen to 2 water molecules using 4 electrons from cytochrome c in the IMS and 4 protons from the mitochondrial matrix. The polypeptide is Cytochrome c oxidase subunit 2 (MT-CO2) (Leggadina forresti (Forrest's mouse)).